Reading from the N-terminus, the 291-residue chain is Formamidopyrimidine-DNA glycosylase (291 aa).

Residue Pro-2 is the Schiff-base intermediate with DNA of the active site. Glu-3 acts as the Proton donor in catalysis. Lys-58 functions as the Proton donor; for beta-elimination activity in the catalytic mechanism. The DNA site is built by His-100, Arg-123, and Lys-166. The segment at 257–291 adopts an FPG-type zinc-finger fold; it reads SVYGREGKECLHCGIPIVRILQSGRSSFYCSQCQK. Arg-281 serves as the catalytic Proton donor; for delta-elimination activity.

It belongs to the FPG family. As to quaternary structure, monomer. Zn(2+) is required as a cofactor.

The enzyme catalyses Hydrolysis of DNA containing ring-opened 7-methylguanine residues, releasing 2,6-diamino-4-hydroxy-5-(N-methyl)formamidopyrimidine.. The catalysed reaction is 2'-deoxyribonucleotide-(2'-deoxyribose 5'-phosphate)-2'-deoxyribonucleotide-DNA = a 3'-end 2'-deoxyribonucleotide-(2,3-dehydro-2,3-deoxyribose 5'-phosphate)-DNA + a 5'-end 5'-phospho-2'-deoxyribonucleoside-DNA + H(+). Its function is as follows. Involved in base excision repair of DNA damaged by oxidation or by mutagenic agents. Acts as a DNA glycosylase that recognizes and removes damaged bases. Has a preference for oxidized purines, such as 7,8-dihydro-8-oxoguanine (8-oxoG). Has AP (apurinic/apyrimidinic) lyase activity and introduces nicks in the DNA strand. Cleaves the DNA backbone by beta-delta elimination to generate a single-strand break at the site of the removed base with both 3'- and 5'-phosphates. The polypeptide is Formamidopyrimidine-DNA glycosylase (Bartonella henselae (strain ATCC 49882 / DSM 28221 / CCUG 30454 / Houston 1) (Rochalimaea henselae)).